We begin with the raw amino-acid sequence, 177 residues long: F(420)H(2) dehydrogenase subunit I (177 aa).

Residues 1–21 (MGCPEVQDRPGSGYELEETPA) are disordered. 4Fe-4S ferredoxin-type domains lie at 76 to 105 (GLQTLDKSKCIGCGICANTCPNSAIKIVKA) and 116 to 145 (WFPQIDIGHCLFCGLCIDQCPKGALSSGKE). 8 residues coordinate [4Fe-4S] cluster: C85, C88, C91, C95, C125, C128, C131, and C135.

It belongs to the complex I 23 kDa subunit family. In terms of assembly, the FPO complex is composed of at least 13 different subunits. [4Fe-4S] cluster serves as cofactor.

It carries out the reaction methanophenazine + reduced coenzyme F420-(gamma-L-Glu)(n) = dihydromethanophenazine + oxidized coenzyme F420-(gamma-L-Glu)(n) + H(+). Its function is as follows. Component of the F(420)H(2) dehydrogenase (FPO complex) which is part of the energy-conserving F(420)H(2):heterodisulfide oxidoreductase system. The membrane-bound electron transfer system of the complex plays an important role in the metabolism of methylotrophic methanogens when the organisms grow on methanol or methylamines. Catalyzes the oxidation of methanophenazine to dihydromethanophenazine. It shuttles electrons from F(420)H(2), via FAD and iron-sulfur (Fe-S) centers, to methanophenazine (an electron carrier in the membrane). It couples the redox reaction to proton translocation (for every two electrons transferred, two hydrogen ions are translocated across the cytoplasmic membrane), and thus conserves the redox energy in a proton gradient. It also catalyzes the oxidation of F(420)H(2) with quinones such as 2,3-dimethyl-1,4-naphthoquinone, 2-methyl-1,4-naphthoquinone and tetramethyl-p-benzoquinone. This chain is F(420)H(2) dehydrogenase subunit I (fpoI), found in Methanosarcina mazei (strain ATCC BAA-159 / DSM 3647 / Goe1 / Go1 / JCM 11833 / OCM 88) (Methanosarcina frisia).